Consider the following 150-residue polypeptide: 6,7-dimethyl-8-ribityllumazine synthase (150 aa).

5-amino-6-(D-ribitylamino)uracil contacts are provided by residues phenylalanine 11, 42-44 (IFE), and 73-75 (CAI). 78 to 79 (ES) contacts (2S)-2-hydroxy-3-oxobutyl phosphate. Histidine 81 functions as the Proton donor in the catalytic mechanism. Asparagine 106 serves as a coordination point for 5-amino-6-(D-ribitylamino)uracil. A (2S)-2-hydroxy-3-oxobutyl phosphate-binding site is contributed by arginine 120.

This sequence belongs to the DMRL synthase family.

It catalyses the reaction (2S)-2-hydroxy-3-oxobutyl phosphate + 5-amino-6-(D-ribitylamino)uracil = 6,7-dimethyl-8-(1-D-ribityl)lumazine + phosphate + 2 H2O + H(+). Its pathway is cofactor biosynthesis; riboflavin biosynthesis; riboflavin from 2-hydroxy-3-oxobutyl phosphate and 5-amino-6-(D-ribitylamino)uracil: step 1/2. In terms of biological role, catalyzes the formation of 6,7-dimethyl-8-ribityllumazine by condensation of 5-amino-6-(D-ribitylamino)uracil with 3,4-dihydroxy-2-butanone 4-phosphate. This is the penultimate step in the biosynthesis of riboflavin. The sequence is that of 6,7-dimethyl-8-ribityllumazine synthase from Paramagnetospirillum magneticum (strain ATCC 700264 / AMB-1) (Magnetospirillum magneticum).